A 1228-amino-acid chain; its full sequence is Nitrate reductase alpha chain (1228 aa).

The 4Fe-4S Mo/W bis-MGD-type domain occupies 47 to 111; that stretch reads DKVVRSTHGV…SFSWYIYSPL (65 aa). [4Fe-4S] cluster-binding residues include histidine 54, cysteine 58, cysteine 62, and cysteine 97. Position 227 (aspartate 227) interacts with Mo-bis(molybdopterin guanine dinucleotide).

It belongs to the prokaryotic molybdopterin-containing oxidoreductase family. [4Fe-4S] cluster serves as cofactor. Mo-bis(molybdopterin guanine dinucleotide) is required as a cofactor.

It is found in the cell membrane. The catalysed reaction is nitrate + a quinol = a quinone + nitrite + H2O. The alpha chain is the actual site of nitrate reduction. This is Nitrate reductase alpha chain (narG) from Bacillus subtilis (strain 168).